Here is a 124-residue protein sequence, read N- to C-terminus: Small ribosomal subunit protein uS12 (124 aa).

3-methylthioaspartic acid is present on Asp89.

The protein belongs to the universal ribosomal protein uS12 family. In terms of assembly, part of the 30S ribosomal subunit. Contacts proteins S8 and S17. May interact with IF1 in the 30S initiation complex.

Its function is as follows. With S4 and S5 plays an important role in translational accuracy. Functionally, interacts with and stabilizes bases of the 16S rRNA that are involved in tRNA selection in the A site and with the mRNA backbone. Located at the interface of the 30S and 50S subunits, it traverses the body of the 30S subunit contacting proteins on the other side and probably holding the rRNA structure together. The combined cluster of proteins S8, S12 and S17 appears to hold together the shoulder and platform of the 30S subunit. This is Small ribosomal subunit protein uS12 from Campylobacter hominis (strain ATCC BAA-381 / DSM 21671 / CCUG 45161 / LMG 19568 / NCTC 13146 / CH001A).